The primary structure comprises 285 residues: Eukaryotic translation initiation factor 3 subunit F-2 (285 aa).

An MPN domain is found at 11-145 (VFIKPLVLFQ…TRLYCAVEIG (135 aa)).

This sequence belongs to the eIF-3 subunit F family. In terms of assembly, component of the eukaryotic translation initiation factor 3 (eIF-3) complex. The eIF-3 complex interacts with pix.

The protein localises to the cytoplasm. Functionally, component of the eukaryotic translation initiation factor 3 (eIF-3) complex, which is involved in protein synthesis of a specialized repertoire of mRNAs and, together with other initiation factors, stimulates binding of mRNA and methionyl-tRNAi to the 40S ribosome. The eIF-3 complex specifically targets and initiates translation of a subset of mRNAs involved in cell proliferation. The protein is Eukaryotic translation initiation factor 3 subunit F-2 of Drosophila yakuba (Fruit fly).